Consider the following 152-residue polypeptide: Large ribosomal subunit protein uL22 (152 aa).

It belongs to the universal ribosomal protein uL22 family. As to quaternary structure, part of the 50S ribosomal subunit.

Functionally, this protein binds specifically to 23S rRNA. It makes multiple contacts with different domains of the 23S rRNA in the assembled 50S subunit and ribosome. Its function is as follows. The globular domain of the protein is located near the polypeptide exit tunnel on the outside of the subunit, while an extended beta-hairpin is found that lines the wall of the exit tunnel in the center of the 70S ribosome. The sequence is that of Large ribosomal subunit protein uL22 from Nitrosopumilus maritimus (strain SCM1).